Reading from the N-terminus, the 214-residue chain is Cytochrome b (214 aa).

4 consecutive transmembrane segments (helical) span residues 31 to 51, 75 to 96, 111 to 131, and 176 to 196; these read FGSMLLSCLMIQIATGFFLAI, WIMQNTHAIGASLFFICIYIHI, WLSGTTLLIILMATAFFGYVL, and FFALHFILPFAIISLSSLHIL. 2 residues coordinate heme b: H81 and H95. Positions 180 and 194 each coordinate heme b. H199 contacts a ubiquinone.

Belongs to the cytochrome b family. As to quaternary structure, the cytochrome bc1 complex contains 3 respiratory subunits (MT-CYB, CYC1 and UQCRFS1), 2 core proteins (UQCRC1 and UQCRC2) and probably 6 low-molecular weight proteins. Requires heme b as cofactor.

The protein resides in the mitochondrion inner membrane. In terms of biological role, component of the ubiquinol-cytochrome c reductase complex (complex III or cytochrome b-c1 complex) that is part of the mitochondrial respiratory chain. The b-c1 complex mediates electron transfer from ubiquinol to cytochrome c. Contributes to the generation of a proton gradient across the mitochondrial membrane that is then used for ATP synthesis. The sequence is that of Cytochrome b (MT-CYB) from Crotalus atrox (Western diamondback rattlesnake).